We begin with the raw amino-acid sequence, 790 residues long: Histone-lysine N-methyltransferase, H3 lysine-9 specific SUVH6 (790 aa).

The disordered stretch occupies residues 251–271 (QLRILGVGTSSGSSSGDSSRN). Residues 256 to 268 (GVGTSSGSSSGDS) are compositionally biased toward low complexity. Residues 330–482 (GEVPGVEVGD…MNVFKFQLRR (153 aa)) enclose the YDG domain. A Pre-SET domain is found at 551-613 (KSCCCTTRCT…SCYLRVTQHG (63 aa)). The Zn(2+) site is built by Cys553, Cys554, Cys555, Cys559, Cys567, Cys569, Cys595, Cys599, Cys601, and Cys605. The region spanning 616 to 760 (LPLEIFKTKS…PLQELCYDYN (145 aa)) is the SET domain. Residues 626–628 (RGW), Asp662, Tyr664, Arg714, and 717–718 (NH) each bind S-adenosyl-L-methionine. Cys720, Cys778, Cys780, and Cys785 together coordinate Zn(2+). Positions 774–790 (KQKPCFCGAAVCRRRLY) constitute a Post-SET domain.

It belongs to the class V-like SAM-binding methyltransferase superfamily. Histone-lysine methyltransferase family. Suvar3-9 subfamily.

Its subcellular location is the nucleus. It localises to the chromosome. The protein resides in the centromere. It catalyses the reaction N(6)-methyl-L-lysyl(9)-[histone H3] + S-adenosyl-L-methionine = N(6),N(6)-dimethyl-L-lysyl(9)-[histone H3] + S-adenosyl-L-homocysteine + H(+). It carries out the reaction L-lysyl(9)-[histone H3] + S-adenosyl-L-methionine = N(6)-methyl-L-lysyl(9)-[histone H3] + S-adenosyl-L-homocysteine + H(+). Histone methyltransferase. Methylates 'Lys-9' of histone H3. H3 'Lys-9' methylation represents a specific tag for epigenetic transcriptional repression. Seems to act preferentially on dsMRNA. The protein is Histone-lysine N-methyltransferase, H3 lysine-9 specific SUVH6 (SUVH6) of Arabidopsis thaliana (Mouse-ear cress).